A 212-amino-acid chain; its full sequence is ATP phosphoribosyltransferase (212 aa).

It belongs to the ATP phosphoribosyltransferase family. Short subfamily. As to quaternary structure, heteromultimer composed of HisG and HisZ subunits.

It localises to the cytoplasm. It catalyses the reaction 1-(5-phospho-beta-D-ribosyl)-ATP + diphosphate = 5-phospho-alpha-D-ribose 1-diphosphate + ATP. The protein operates within amino-acid biosynthesis; L-histidine biosynthesis; L-histidine from 5-phospho-alpha-D-ribose 1-diphosphate: step 1/9. Catalyzes the condensation of ATP and 5-phosphoribose 1-diphosphate to form N'-(5'-phosphoribosyl)-ATP (PR-ATP). Has a crucial role in the pathway because the rate of histidine biosynthesis seems to be controlled primarily by regulation of HisG enzymatic activity. This is ATP phosphoribosyltransferase from Prochlorococcus marinus (strain MIT 9301).